Here is a 128-residue protein sequence, read N- to C-terminus: Fluoride-specific ion channel FluC (128 aa).

The next 4 helical transmembrane spans lie at 3-23 (LYAL…RWWF), 33-53 (TLPL…GAAI), 69-89 (FAIT…AETV), and 99-119 (WTFV…ILGI). Glycine 76 and threonine 79 together coordinate Na(+).

It belongs to the fluoride channel Fluc/FEX (TC 1.A.43) family.

The protein localises to the cell inner membrane. It carries out the reaction fluoride(in) = fluoride(out). Its activity is regulated as follows. Na(+) is not transported, but it plays an essential structural role and its presence is essential for fluoride channel function. Functionally, fluoride-specific ion channel. Important for reducing fluoride concentration in the cell, thus reducing its toxicity. This is Fluoride-specific ion channel FluC from Nitrosospira multiformis (strain ATCC 25196 / NCIMB 11849 / C 71).